A 587-amino-acid polypeptide reads, in one-letter code: Putative ankyrin repeat protein L66 (587 aa).

16 ANK repeats span residues 77–106 (DKNL…DIRI), 108–136 (NNYP…DVSD), 137–166 (YDNY…DVHC), 168–196 (DNAP…DVNY), 199–228 (NEDL…NIHF), 230–256 (DSLI…ILGN), 259–288 (NIRN…SIEN), 302–331 (FKKN…NVAF), 333–360 (DNLP…NVKI), 361–390 (NYEN…NVKD), 392–418 (TAIY…DLIK), 420–448 (HNEI…INKS), 449–478 (IYDK…DIKS), 480–507 (KFHD…KINN), 509–537 (YKNL…NMKC), and 539–567 (RIDT…KLIC).

This is Putative ankyrin repeat protein L66 from Acanthamoeba polyphaga mimivirus (APMV).